Consider the following 103-residue polypeptide: Large ribosomal subunit protein bL21 (103 aa).

This sequence belongs to the bacterial ribosomal protein bL21 family. In terms of assembly, part of the 50S ribosomal subunit. Contacts protein L20.

Functionally, this protein binds to 23S rRNA in the presence of protein L20. This is Large ribosomal subunit protein bL21 from Legionella pneumophila (strain Paris).